The sequence spans 236 residues: tRNA1(Val) (adenine(37)-N6)-methyltransferase (236 aa).

The protein belongs to the methyltransferase superfamily. tRNA (adenine-N(6)-)-methyltransferase family.

It localises to the cytoplasm. It catalyses the reaction adenosine(37) in tRNA1(Val) + S-adenosyl-L-methionine = N(6)-methyladenosine(37) in tRNA1(Val) + S-adenosyl-L-homocysteine + H(+). Specifically methylates the adenine in position 37 of tRNA(1)(Val) (anticodon cmo5UAC). This chain is tRNA1(Val) (adenine(37)-N6)-methyltransferase, found in Aeromonas hydrophila subsp. hydrophila (strain ATCC 7966 / DSM 30187 / BCRC 13018 / CCUG 14551 / JCM 1027 / KCTC 2358 / NCIMB 9240 / NCTC 8049).